The chain runs to 177 residues: Large ribosomal subunit protein uL6 (177 aa).

Belongs to the universal ribosomal protein uL6 family. As to quaternary structure, part of the 50S ribosomal subunit.

Its function is as follows. This protein binds to the 23S rRNA, and is important in its secondary structure. It is located near the subunit interface in the base of the L7/L12 stalk, and near the tRNA binding site of the peptidyltransferase center. This Methylobacillus flagellatus (strain ATCC 51484 / DSM 6875 / VKM B-1610 / KT) protein is Large ribosomal subunit protein uL6.